An 81-amino-acid chain; its full sequence is Xenopsin peptides (81 aa).

The N-terminal stretch at 1-20 (MYKGIFLCVLLAVICANSLA) is a signal peptide. The propeptide occupies 21–37 (TPSSDADEDNDEVERYV). Positions 65–73 (EAMLRSAEA) are cleaved as a propeptide — removed in mature form by a dipeptidylpeptidase.

Belongs to the gastrin/cholecystokinin family. Magainin subfamily. In terms of tissue distribution, XPF is synthesized in the stomach and stored in a novel granular multinucleated cell in the gastric mucosa, it is stored as active, processed peptides in large granules within the granular gland secretions of the skin.

Its subcellular location is the secreted. Xenopsin is a neurotensin-like octapeptide. Its function is as follows. XPF has antimicrobial activity. The sequence is that of Xenopsin peptides from Xenopus laevis (African clawed frog).